Here is a 1123-residue protein sequence, read N- to C-terminus: MWGDSRPANRTGPFRGSQEERFAPGWNRDYPPPPLKSHAQERHSGNFPGRDSLPFDFQGHSGPPFANVEEHSFSYGARDGPHGDYRGGEGPGHDFRGGDFSSSDFQSRDSSQLDFRGRDIHSGDFRDREGPPMDYRGGDGTSMDYRGREAPHMNYRDRDAHAVDFRGRDAPPSDFRGRGTYDLDFRGRDGSHADFRGRDLSDLDFRAREQSRSDFRNRDVSDLDFRDKDGTQVDFRGRGSGTTDLDFRDRDTPHSDFRGRHRSRTDQDFRGREMGSCMEFKDREMPPVDPNILDYIQPSTQDREHSGMNVNRREESTHDHTIERPAFGIQKGEFEHSETREGETQGVAFEHESPADFQNSQSPVQDQDKSQLSGREEQSSDAGLFKEEGGLDFLGRQDTDYRSMEYRDVDHRLPGSQMFGYGQSKSFPEGKTARDAQRDLQDQDYRTGPSEEKPSRLIRLSGVPEDATKEEILNAFRTPDGMPVKNLQLKEYNTGYDYGYVCVEFSLLEDAIGCMEANQGTLMIQDKEVTLEYVSSLDFWYCKRCKANIGGHRSSCSFCKNPREVTEAKQELITYPQPQKTSIPAPLEKQPNQPLRPADKEPEPRKREEGQESRLGHQKREAERYLPPSRREGPTFRRDRERESWSGETRQDGESKTIMLKRIYRSTPPEVIVEVLEPYVRLTTANVRIIKNRTGPMGHTYGFIDLDSHAEALRVVKILQNLDPPFSIDGKMVAVNLATGKRRNDSGDHSDHMHYYQGKKYFRDRRGGGRNSDWSSDTNRQGQQSSSDCYIYDSATGYYYDPLAGTYYDPNTQQEVYVPQDPGLPEEEEIKEKKPTSQGKSSSKKEMSKRDGKEKKDRGVTRFQENASEGKAPAEDVFKKPLPPTVKKEESPPPPKVVNPLIGLLGEYGGDSDYEEEEEEEQTPPPQPRTAQPQKREEQTKKENEEDKLTDWNKLACLLCRRQFPNKEVLIKHQQLSDLHKQNLEIHRKIKQSEQELAYLERREREGKFKGRGNDRREKLQSFDSPERKRIKYSRETDSDRKLVDKEDIDTSSKGGCVQQATGWRKGTGLGYGHPGLASSEEAEGRMRGPSVGASGRTSKRQSNETYRDAVRRVMFARYKELD.

Disordered stretches follow at residues 1–391 (MWGD…EGGL) and 413–454 (LPGS…EEKP). Ser17 bears the Phosphoserine mark. Lys36 participates in a covalent cross-link: Glycyl lysine isopeptide (Lys-Gly) (interchain with G-Cter in SUMO2). Positions 79–97 (DGPHGDYRGGEGPGHDFRG) are enriched in basic and acidic residues. Over residues 98–114 (GDFSSSDFQSRDSSQLD) the composition is skewed to low complexity. Basic and acidic residues-rich tracts occupy residues 115–131 (FRGR…REGP) and 145–237 (YRGR…DFRG). At Ser240 the chain carries Phosphoserine. Basic and acidic residues-rich tracts occupy residues 245–286 (LDFR…REMP) and 301–323 (QDRE…HTIE). Residue Lys331 forms a Glycyl lysine isopeptide (Lys-Gly) (interchain with G-Cter in SUMO2) linkage. Basic and acidic residues predominate over residues 332 to 354 (GEFEHSETREGETQGVAFEHESP). Position 344 is a phosphothreonine (Thr344). Over residues 356 to 365 (DFQNSQSPVQ) the composition is skewed to polar residues. Phosphoserine is present on residues Ser360 and Ser362. Composition is skewed to basic and acidic residues over residues 366 to 391 (DQDK…EGGL) and 431 to 454 (KTAR…EEKP). Residues Lys386, Lys453, Lys469, and Lys569 each participate in a glycyl lysine isopeptide (Lys-Gly) (interchain with G-Cter in SUMO2) cross-link. In terms of domain architecture, RRM spans 456–536 (RLIRLSGVPE…KEVTLEYVSS (81 aa)). Disordered regions lie at residues 574–654 (TYPQ…QDGE), 741–787 (KRRN…QSSS), and 827–948 (EEEI…EEDK). Composition is skewed to basic and acidic residues over residues 597 to 654 (PADK…QDGE) and 742 to 754 (RRND…DHMH). Residues 772-787 (SDWSSDTNRQGQQSSS) show a composition bias toward polar residues. The span at 843-860 (SKKEMSKRDGKEKKDRGV) shows a compositional bias: basic and acidic residues. Glycyl lysine isopeptide (Lys-Gly) (interchain with G-Cter in SUMO2) cross-links involve residues Lys871, Lys879, and Lys887. Phosphoserine is present on Ser891. Positions 910–922 (GDSDYEEEEEEEQ) are enriched in acidic residues. Residues 934–948 (QKREEQTKKENEEDK) show a composition bias toward basic and acidic residues. Glycyl lysine isopeptide (Lys-Gly) (interchain with G-Cter in SUMO2) cross-links involve residues Lys935, Lys948, Lys991, and Lys1019. Residues 1004–1051 (EREGKFKGRGNDRREKLQSFDSPERKRIKYSRETDSDRKLVDKEDIDT) show a composition bias toward basic and acidic residues. The interval 1004 to 1106 (EREGKFKGRG…RTSKRQSNET (103 aa)) is disordered. Ser1022 and Ser1025 each carry phosphoserine. Residues Lys1042, Lys1046, and Lys1066 each participate in a glycyl lysine isopeptide (Lys-Gly) (interchain with G-Cter in SUMO2) cross-link. The G-patch domain occupies 1051–1097 (TSSKGGCVQQATGWRKGTGLGYGHPGLASSEEAEGRMRGPSVGASGR).

In terms of assembly, may interact with FAM168B. In terms of tissue distribution, ubiquitous in adults.

The protein localises to the nucleus. Specifically binds poly(G) RNA homopolymers in vitro. The sequence is that of RNA-binding protein 6 (RBM6) from Homo sapiens (Human).